A 160-amino-acid polypeptide reads, in one-letter code: 6,7-dimethyl-8-ribityllumazine synthase (160 aa).

Residues Trp-26, 58–60 (AIE), and 80–82 (VVI) contribute to the 5-amino-6-(D-ribitylamino)uracil site. 85–86 (ET) provides a ligand contact to (2S)-2-hydroxy-3-oxobutyl phosphate. His-88 serves as the catalytic Proton donor. Asn-113 contributes to the 5-amino-6-(D-ribitylamino)uracil binding site. Arg-127 provides a ligand contact to (2S)-2-hydroxy-3-oxobutyl phosphate.

Belongs to the DMRL synthase family. In terms of assembly, homopentamer.

The enzyme catalyses (2S)-2-hydroxy-3-oxobutyl phosphate + 5-amino-6-(D-ribitylamino)uracil = 6,7-dimethyl-8-(1-D-ribityl)lumazine + phosphate + 2 H2O + H(+). It participates in cofactor biosynthesis; riboflavin biosynthesis; riboflavin from 2-hydroxy-3-oxobutyl phosphate and 5-amino-6-(D-ribitylamino)uracil: step 1/2. In terms of biological role, catalyzes the formation of 6,7-dimethyl-8-ribityllumazine by condensation of 5-amino-6-(D-ribitylamino)uracil with 3,4-dihydroxy-2-butanone 4-phosphate. This is the penultimate step in the biosynthesis of riboflavin. The protein is 6,7-dimethyl-8-ribityllumazine synthase of Mycobacteroides abscessus (strain ATCC 19977 / DSM 44196 / CCUG 20993 / CIP 104536 / JCM 13569 / NCTC 13031 / TMC 1543 / L948) (Mycobacterium abscessus).